Reading from the N-terminus, the 105-residue chain is MTGTIDEFKKLVDAEEFFQFFNMSYDLEVVNVHRLHILKKFSQYMHEIDENSPDLSQEEKLNQYSLALQKAYQVFIESTAYEQKLFKVFNDKPKNVVTLTEITSD.

Belongs to the NifW family. Homotrimer; associates with NifD.

Its function is as follows. May protect the nitrogenase Fe-Mo protein from oxidative damage. This is Nitrogenase-stabilizing/protective protein NifW from Nostoc punctiforme (strain ATCC 29133 / PCC 73102).